The chain runs to 335 residues: Glycerol-3-phosphate dehydrogenase [NAD(P)+] (335 aa).

NADPH-binding residues include S12, W13, and K107. Sn-glycerol 3-phosphate contacts are provided by K107, G138, and S140. A142 provides a ligand contact to NADPH. Sn-glycerol 3-phosphate is bound by residues K193, D246, S256, R257, and N258. The Proton acceptor role is filled by K193. R257 contributes to the NADPH binding site. Residues V281 and E283 each coordinate NADPH.

This sequence belongs to the NAD-dependent glycerol-3-phosphate dehydrogenase family.

Its subcellular location is the cytoplasm. It catalyses the reaction sn-glycerol 3-phosphate + NAD(+) = dihydroxyacetone phosphate + NADH + H(+). The catalysed reaction is sn-glycerol 3-phosphate + NADP(+) = dihydroxyacetone phosphate + NADPH + H(+). The protein operates within membrane lipid metabolism; glycerophospholipid metabolism. Its function is as follows. Catalyzes the reduction of the glycolytic intermediate dihydroxyacetone phosphate (DHAP) to sn-glycerol 3-phosphate (G3P), the key precursor for phospholipid synthesis. The chain is Glycerol-3-phosphate dehydrogenase [NAD(P)+] from Geobacter sp. (strain M21).